The primary structure comprises 172 residues: MKKVIAIDMDQVLADLLSDWVAYINTYDDPFLKEKDILCWDIKKYTNTNNNVYRHLDYDLFRNLNVIEGSQRVTKELMKKYEVYVVTTATNHPDSLKAKLEWLTEYFPFIPHSNVVLCGNKNIIKADIMIDDGIHNLESFEGMKILFDAPHNRNENRFIRVMNWEEIERKLL.

Aspartate 8 serves as the catalytic Nucleophile. Positions 8, 10, and 132 each coordinate Mg(2+). Aspartate 10 functions as the Proton donor in the catalytic mechanism.

It belongs to the 5'(3')-deoxyribonucleotidase family. Requires Mg(2+) as cofactor.

In terms of biological role, dephosphorylates nucleoside monophosphates such as the 5' and 2'(3')-phosphates of deoxyribonucleotides in vitro. Also catalyzes the dephosphorylation of coenzyme A (CoA), pyridoxal-5'-phosphate (PLP), riboflavine-5-phosphate (FMN) and nicotinamide adenine dinucleotide phosphate (NADP) in vitro. The sequence is that of 5'(3')-deoxyribonucleotidase (yorS) from Bacillus subtilis (strain 168).